A 233-amino-acid chain; its full sequence is 7-cyano-7-deazaguanine synthase (233 aa).

13 to 23 (LSGGLDSATAM) contacts ATP. Positions 197, 207, 210, and 213 each coordinate Zn(2+).

The protein belongs to the QueC family. The cofactor is Zn(2+).

The enzyme catalyses 7-carboxy-7-deazaguanine + NH4(+) + ATP = 7-cyano-7-deazaguanine + ADP + phosphate + H2O + H(+). It participates in purine metabolism; 7-cyano-7-deazaguanine biosynthesis. Functionally, catalyzes the ATP-dependent conversion of 7-carboxy-7-deazaguanine (CDG) to 7-cyano-7-deazaguanine (preQ(0)). This is 7-cyano-7-deazaguanine synthase from Desulfatibacillum aliphaticivorans.